Consider the following 522-residue polypeptide: Wax ester synthase/diacylglycerol acyltransferase 4 (522 aa).

Over residues 1–12 (MEIETRPHISGD) the composition is skewed to basic and acidic residues. The tract at residues 1 to 20 (MEIETRPHISGDEKEEEQPL) is disordered. The Cytoplasmic segment spans residues 1-205 (MEIETRPHIS…SDSRLLWLVK (205 aa)). The Proton acceptor role is filled by H149. The chain crosses the membrane as a helical span at residues 206-226 (VIWTAVILGLNTVCDALEFIV). Topologically, residues 227 to 522 (TTLFVKDTET…QIAGLLYRML (296 aa)) are lumenal. N-linked (GlcNAc...) asparagine glycosylation is found at N270 and N409.

The protein in the N-terminal section; belongs to the long-chain O-acyltransferase family. As to expression, mostly expressed in roots, flowers and siliques.

The protein localises to the cell membrane. It localises to the endoplasmic reticulum membrane. It catalyses the reaction an acyl-CoA + a 1,2-diacyl-sn-glycerol = a triacyl-sn-glycerol + CoA. It carries out the reaction a long chain fatty alcohol + a fatty acyl-CoA = a wax ester + CoA. It participates in glycerolipid metabolism; triacylglycerol biosynthesis. It functions in the pathway lipid metabolism. Functionally, bifunctional wax ester synthase/diacylglycerol acyltransferase. Involved in cuticular wax biosynthesis. This Arabidopsis thaliana (Mouse-ear cress) protein is Wax ester synthase/diacylglycerol acyltransferase 4.